The sequence spans 454 residues: COBRA-like protein 6 (454 aa).

Residues 1–24 (MGAMLNLLLVVTVILCSILSPTRF) form the signal peptide. Asn-104, Asn-191, Asn-320, Asn-355, and Asn-391 each carry an N-linked (GlcNAc...) asparagine glycan. Ser-429 carries GPI-anchor amidated serine lipidation. Positions 430–454 (SSSSAVISSVSVVFCFLLHHLLLLV) are cleaved as a propeptide — removed in mature form.

The protein belongs to the COBRA family. In terms of tissue distribution, expressed in flowers and siliques.

The protein localises to the cell membrane. In Arabidopsis thaliana (Mouse-ear cress), this protein is COBRA-like protein 6 (COBL6).